A 772-amino-acid chain; its full sequence is Carnitine O-palmitoyltransferase 1, muscle isoform (772 aa).

The Cytoplasmic portion of the chain corresponds to 1 to 47 (MAEAHQAVAFQFTVTPDGVDFRLSREALKHVYLSGINSWKKRLIRIK). The chain crosses the membrane as a helical span at residues 48–73 (NGILRGVYPGSPTSWLVVIMATVGSS). The Mitochondrial intermembrane portion of the chain corresponds to 74–102 (FCNVDISLGLVSCIQRCLPQGCGPYQTPQ). A helical transmembrane segment spans residues 103-122 (TRALLSMAIFSTGVWVTGIF). The Cytoplasmic portion of the chain corresponds to 123–772 (FFRQTLKLLL…DLFQVPKAYS (650 aa)). His-473 acts as the Proton acceptor in catalysis. Position 555 to 567 (555 to 567 (GKGLIKKCRTSPD)) interacts with CoA. Positions 589 and 602 each coordinate (R)-carnitine.

The protein belongs to the carnitine/choline acetyltransferase family. Strong expression in heart and skeletal muscle. No expression in liver and kidney.

The protein localises to the mitochondrion outer membrane. The catalysed reaction is (R)-carnitine + hexadecanoyl-CoA = O-hexadecanoyl-(R)-carnitine + CoA. Its pathway is lipid metabolism; fatty acid beta-oxidation. Its function is as follows. Catalyzes the transfer of the acyl group of long-chain fatty acid-CoA conjugates onto carnitine, an essential step for the mitochondrial uptake of long-chain fatty acids and their subsequent beta-oxidation in the mitochondrion. The protein is Carnitine O-palmitoyltransferase 1, muscle isoform (CPT1B) of Homo sapiens (Human).